A 246-amino-acid chain; its full sequence is Phosphomannomutase (246 aa).

Catalysis depends on Asp-9, which acts as the Nucleophile. Positions 9 and 11 each coordinate Mg(2+). The active-site Proton donor/acceptor is Asp-11. Alpha-D-mannose 1-phosphate contacts are provided by Arg-121, Arg-132, Arg-139, Ser-179, and Asp-181. Asp-207 is a binding site for Mg(2+).

This sequence belongs to the eukaryotic PMM family. As to quaternary structure, homodimer.

It localises to the cytoplasm. The catalysed reaction is alpha-D-mannose 1-phosphate = D-mannose 6-phosphate. It participates in nucleotide-sugar biosynthesis; GDP-alpha-D-mannose biosynthesis; alpha-D-mannose 1-phosphate from D-fructose 6-phosphate: step 2/2. Functionally, involved in the synthesis of the GDP-mannose and dolichol-phosphate-mannose required for a number of critical mannosyl transfer reactions. The sequence is that of Phosphomannomutase (PMM) from Babesia bovis.